The sequence spans 228 residues: Probable C4-dicarboxylate response regulator DctR (228 aa).

The region spanning threonine 7–arginine 123 is the Response regulatory domain. Aspartate 58 carries the 4-aspartylphosphate modification. A DNA-binding region (H-T-H motif) is located at residues alanine 180 to glutamate 199.

In terms of processing, phosphorylated by DctS.

The protein resides in the cytoplasm. In terms of biological role, member of the two-component regulatory system DctS/DctR. Essential for expression of DctP. This Priestia megaterium (Bacillus megaterium) protein is Probable C4-dicarboxylate response regulator DctR (dctR).